The sequence spans 231 residues: ATP-dependent dethiobiotin synthetase BioD (231 aa).

E12–V17 serves as a coordination point for ATP. T16 provides a ligand contact to Mg(2+). The active site involves K37. A substrate-binding site is contributed by S41. ATP contacts are provided by residues D51, E112–G115, and P202–L204. Mg(2+) is bound by residues D51 and E112.

Belongs to the dethiobiotin synthetase family. As to quaternary structure, homodimer. It depends on Mg(2+) as a cofactor.

It is found in the cytoplasm. It carries out the reaction (7R,8S)-7,8-diammoniononanoate + CO2 + ATP = (4R,5S)-dethiobiotin + ADP + phosphate + 3 H(+). Its pathway is cofactor biosynthesis; biotin biosynthesis; biotin from 7,8-diaminononanoate: step 1/2. In terms of biological role, catalyzes a mechanistically unusual reaction, the ATP-dependent insertion of CO2 between the N7 and N8 nitrogen atoms of 7,8-diaminopelargonic acid (DAPA, also called 7,8-diammoniononanoate) to form a ureido ring. This chain is ATP-dependent dethiobiotin synthetase BioD, found in Bacillus subtilis subsp. natto.